Consider the following 464-residue polypeptide: 3-isopropylmalate dehydratase large subunit (464 aa).

[4Fe-4S] cluster-binding residues include C337, C397, and C400.

Belongs to the aconitase/IPM isomerase family. LeuC type 1 subfamily. Heterodimer of LeuC and LeuD. It depends on [4Fe-4S] cluster as a cofactor.

It catalyses the reaction (2R,3S)-3-isopropylmalate = (2S)-2-isopropylmalate. The protein operates within amino-acid biosynthesis; L-leucine biosynthesis; L-leucine from 3-methyl-2-oxobutanoate: step 2/4. In terms of biological role, catalyzes the isomerization between 2-isopropylmalate and 3-isopropylmalate, via the formation of 2-isopropylmaleate. This Bacillus cereus (strain ATCC 14579 / DSM 31 / CCUG 7414 / JCM 2152 / NBRC 15305 / NCIMB 9373 / NCTC 2599 / NRRL B-3711) protein is 3-isopropylmalate dehydratase large subunit.